The following is a 423-amino-acid chain: L-cysteine:1D-myo-inositol 2-amino-2-deoxy-alpha-D-glucopyranoside ligase (423 aa).

Cys43 lines the Zn(2+) pocket. Residues 43–46, Thr58, and 81–83 each bind L-cysteinyl-5'-AMP; these read CGIT and NVT. The short motif at 45-55 is the 'HIGH' region element; sequence ITPYDATHMGH. Residues 199-204 carry the 'ERGGDP' region motif; sequence ERGGDP. An L-cysteinyl-5'-AMP-binding site is contributed by Trp240. Cys244 provides a ligand contact to Zn(2+). 262-264 serves as a coordination point for L-cysteinyl-5'-AMP; that stretch reads GSD. Residue His269 participates in Zn(2+) binding. Residue Val295 coordinates L-cysteinyl-5'-AMP. The short motif at 301 to 305 is the 'KMSKS' region element; that stretch reads KMSKS.

Belongs to the class-I aminoacyl-tRNA synthetase family. MshC subfamily. Monomer. Zn(2+) is required as a cofactor.

It catalyses the reaction 1D-myo-inositol 2-amino-2-deoxy-alpha-D-glucopyranoside + L-cysteine + ATP = 1D-myo-inositol 2-(L-cysteinylamino)-2-deoxy-alpha-D-glucopyranoside + AMP + diphosphate + H(+). Its function is as follows. Catalyzes the ATP-dependent condensation of GlcN-Ins and L-cysteine to form L-Cys-GlcN-Ins. The polypeptide is L-cysteine:1D-myo-inositol 2-amino-2-deoxy-alpha-D-glucopyranoside ligase (Renibacterium salmoninarum (strain ATCC 33209 / DSM 20767 / JCM 11484 / NBRC 15589 / NCIMB 2235)).